Reading from the N-terminus, the 144-residue chain is uncharacterized protein (144 aa).

Polar residues predominate over residues 125-135 (PQQQNNHQLQS). The segment at 125–144 (PQQQNNHQLQSKPKAASISR) is disordered.

This is an uncharacterized protein from Rickettsia prowazekii (strain Madrid E).